The chain runs to 805 residues: Angiotensin-converting enzyme 2 (805 aa).

An N-terminal signal peptide occupies residues 1–17; the sequence is MSSSCWLLLSLVAVATA. Residues 18 to 740 are Extracellular-facing; sequence QSLIEEKAES…LKPPYEPPVT (723 aa). One can recognise a Peptidase M2 domain in the interval 19–607; that stretch reads SLIEEKAESF…QNRNSTVGWS (589 aa). 3 N-linked (GlcNAc...) asparagine glycosylation sites follow: Asn-53, Asn-82, and Asn-90. An intrachain disulfide couples Cys-133 to Cys-141. Arg-169 serves as a coordination point for chloride. Position 273 (Arg-273) interacts with substrate. Asn-299 carries an N-linked (GlcNAc...) asparagine glycan. Residues Cys-344 and Cys-361 are joined by a disulfide bond. 345–346 is a binding site for substrate; it reads HP. A Zn(2+)-binding site is contributed by His-374. Glu-375 (proton acceptor) is an active-site residue. Zn(2+) is bound by residues His-378 and Glu-402. A glycan (N-linked (GlcNAc...) asparagine) is linked at Asn-432. Chloride is bound by residues Trp-477 and Lys-481. His-505 (proton donor) is an active-site residue. Substrate is bound at residue Tyr-515. A disulfide bond links Cys-530 and Cys-542. 2 N-linked (GlcNAc...) asparagine glycosylation sites follow: Asn-546 and Asn-601. In terms of domain architecture, Collectrin-like spans 614-805; sequence ADQSIKVRIS…QNSDDAQTSF (192 aa). The segment at 652 to 659 is essential for cleavage by ADAM17; the sequence is REYFSREK. N-linked (GlcNAc...) asparagine glycosylation is found at Asn-660 and Asn-690. An essential for cleavage by TMPRSS11D and TMPRSS2 region spans residues 697–716; the sequence is RSEVEEAIRMSRGRINDIFG. The chain crosses the membrane as a helical span at residues 741 to 761; sequence IWLIIFGVVMGTVVVGIVILI. At 762 to 805 the chain is on the cytoplasmic side; sequence VTGIKGRKKKNETKREENPYDSMDIGKGESNAGFQNSDDAQTSF. The disordered stretch occupies residues 771 to 805; sequence KNETKREENPYDSMDIGKGESNAGFQNSDDAQTSF. An LIR motif is present at residues 778 to 786; sequence ENPYDSMDI. Tyr-781 is modified (phosphotyrosine). Positions 781–784 match the Endocytic sorting signal motif; it reads YDSM. The SH2-binding motif lies at 781–785; that stretch reads YDSMD. Ser-783 carries the post-translational modification Phosphoserine. Residue Lys-788 forms a Glycyl lysine isopeptide (Lys-Gly) (interchain with G-Cter in ubiquitin) linkage. The PTB motif lies at 792 to 795; the sequence is NAGF. Polar residues predominate over residues 793-805; that stretch reads AGFQNSDDAQTSF. The PDZ-binding motif lies at 803-805; it reads TSF.

The protein belongs to the peptidase M2 family. In terms of assembly, homodimer. Interacts with the catalytically active form of TMPRSS2. Interacts with SLC6A19; this interaction is essential for expression and function of SLC6A19 in intestine. Interacts with ITGA5:ITGB1. Probably interacts (via endocytic sorting signal motif) with AP2M1; the interaction is inhibited by phosphorylation of Tyr-781. Interacts (via PDZ-binding motif) with NHERF1 (via PDZ domains); the interaction may enhance ACE2 membrane residence. Zn(2+) is required as a cofactor. It depends on chloride as a cofactor. Glycosylated. Post-translationally, proteolytic cleavage by ADAM17 generates a secreted form. Also cleaved by serine proteases: TMPRSS2, TMPRSS11D and HPN/TMPRSS1. In terms of processing, phosphorylated. Phosphorylation at Tyr-781 probably inhibits interaction with AP2M1 and enables interactions with proteins containing SH2 domains. Ubiquitinated. Ubiquitinated on Lys-788 via 'Lys-48'-linked ubiquitin. 'Lys-48'-linked deubiquitinated by USP50 on the Lys-788; leading to its stabilization. As to expression, expressed in heart, kidney and forebrain. In testis, expression is restricted to Leydig cells. In heart, expressed in endothelial cells from small and large arteries, arterial smooth muscle cells, and myocytes (at protein level). Ubiquitously expressed, with highest levels in ileum, bladder and lung.

The protein resides in the secreted. It is found in the cell membrane. It localises to the cytoplasm. Its subcellular location is the cell projection. The protein localises to the cilium. The protein resides in the apical cell membrane. It carries out the reaction angiotensin II + H2O = angiotensin-(1-7) + L-phenylalanine. The catalysed reaction is angiotensin I + H2O = angiotensin-(1-9) + L-leucine. The enzyme catalyses bradykinin(1-8) + H2O = bradykinin(1-7) + L-phenylalanine. It catalyses the reaction neurotensin + H2O = neurotensin-(1-12) + L-leucine. It carries out the reaction kinetensin + H2O = kinetensin-(1-8) + L-leucine. The catalysed reaction is dynorphin A-(1-13) + H2O = dynorphin A-(1-12) + L-lysine. The enzyme catalyses apelin-13 + H2O = apelin-12 + L-phenylalanine. It catalyses the reaction [Pyr1]apelin-13 + H2O = [Pyr1]apelin-12 + L-phenylalanine. It carries out the reaction apelin-17 + H2O = apelin-16 + L-phenylalanine. Activated by chloride and fluoride, but not bromide. Inhibited by MLN-4760, cFP_Leu, and EDTA, but not by the ACE inhibitors linosipril, captopril, enalaprilat. Essential counter-regulatory carboxypeptidase of the renin-angiotensin hormone system that is a critical regulator of blood volume, systemic vascular resistance, and thus cardiovascular homeostasis. Converts angiotensin I to angiotensin 1-9, a nine-amino acid peptide with anti-hypertrophic effects in cardiomyocytes, and angiotensin II to angiotensin 1-7, which then acts as a beneficial vasodilator and anti-proliferation agent, counterbalancing the actions of the vasoconstrictor angiotensin II. Also removes the C-terminal residue from three other vasoactive peptides, neurotensin, kinetensin, and des-Arg bradykinin, but is not active on bradykinin. Also cleaves other biological peptides, such as apelins, casomorphins and dynorphin A. Plays an important role in amino acid transport by acting as binding partner of amino acid transporter SLC6A19 in intestine, regulating trafficking, expression on the cell surface, and its catalytic activity. The protein is Angiotensin-converting enzyme 2 (Ace2) of Rattus norvegicus (Rat).